We begin with the raw amino-acid sequence, 336 residues long: Atypical chemokine receptor 1 (336 aa).

Residues 1–63 (MGNCLHQAEL…CSLLNDSSLP (63 aa)) lie on the Extracellular side of the membrane. N-linked (GlcNAc...) asparagine glycans are attached at residues Asn16, Asn27, Asn33, and Asn58. 2 disulfides stabilise this stretch: Cys51-Cys276 and Cys129-Cys195. Residues 64–84 (FFILASDLGILASSTVLFMLF) traverse the membrane as a helical segment. The Cytoplasmic segment spans residues 85–95 (RPLFRWQLCPG). The helical transmembrane segment at 96 to 116 (WPVLAQLAVGSALFSIVVPIL) threads the bilayer. The Extracellular portion of the chain corresponds to 117–129 (APGLGNTHSSALC). Residues 130–153 (SLGYCVWYGSAFAQALLLGCHASL) form a helical membrane-spanning segment. Residues 154–166 (GPKLGAGQVPGLT) are Cytoplasmic-facing. The helical transmembrane segment at 167–187 (LGLPVGLWGATALLTLPITLA) threads the bilayer. Topologically, residues 188 to 207 (SGASDGLCTPIYSTELEALQ) are extracellular. The chain crosses the membrane as a helical span at residues 208–228 (ATHAVACFAIFVLLPLGLFGA). At 229–244 (KGLKKALGMGPGPWMN) the chain is on the cytoplasmic side. The chain crosses the membrane as a helical span at residues 245–265 (ILWVWFIFWWPHGLVLGLDFL). The Extracellular portion of the chain corresponds to 266 to 287 (VGSKLSLLPTCLAQQVLDLLLN). The chain crosses the membrane as a helical span at residues 288-308 (LAEALAIVHCVATPLLLALFC). Topologically, residues 309-336 (HQTTRTLLPSLPLPERWSSPVDTLGSKS) are cytoplasmic.

The protein belongs to the G-protein coupled receptor 1 family. Atypical chemokine receptor subfamily.

Its subcellular location is the early endosome. It localises to the recycling endosome. The protein localises to the membrane. Atypical chemokine receptor that controls chemokine levels and localization via high-affinity chemokine binding that is uncoupled from classic ligand-driven signal transduction cascades, resulting instead in chemokine sequestration, degradation, or transcytosis. Also known as interceptor (internalizing receptor) or chemokine-scavenging receptor or chemokine decoy receptor. Has a promiscuous chemokine-binding profile, interacting with inflammatory chemokines of both the CXC and the CC subfamilies but not with homeostatic chemokines. Acts as a receptor for chemokines including CCL2, CCL5, CCL7, CCL11, CCL13, CCL14, CCL17, CXCL5, CXCL6, IL8/CXCL8, CXCL11, GRO, RANTES, MCP-1 and TARC. May regulate chemokine bioavailability and, consequently, leukocyte recruitment through two distinct mechanisms: when expressed in endothelial cells, it sustains the abluminal to luminal transcytosis of tissue-derived chemokines and their subsequent presentation to circulating leukocytes; when expressed in erythrocytes, serves as blood reservoir of cognate chemokines but also as a chemokine sink, buffering potential surges in plasma chemokine levels. The polypeptide is Atypical chemokine receptor 1 (ACKR1) (Saimiri boliviensis boliviensis (Bolivian squirrel monkey)).